The primary structure comprises 192 residues: Fe/S biogenesis protein NfuA (192 aa).

[4Fe-4S] cluster contacts are provided by Cys149 and Cys152.

It belongs to the NfuA family. In terms of assembly, homodimer. [4Fe-4S] cluster serves as cofactor.

Functionally, involved in iron-sulfur cluster biogenesis. Binds a 4Fe-4S cluster, can transfer this cluster to apoproteins, and thereby intervenes in the maturation of Fe/S proteins. Could also act as a scaffold/chaperone for damaged Fe/S proteins. The sequence is that of Fe/S biogenesis protein NfuA from Shewanella baltica (strain OS223).